The chain runs to 86 residues: Toxin Tpa5 (86 aa).

The first 20 residues, 1–20 (MSIFPIALALLLIGLEEGEA), serve as a signal peptide directing secretion. Residues 22–85 (RDGYPISKNN…WGDPGTPPCM (64 aa)) form the LCN-type CS-alpha/beta domain. 4 cysteine pairs are disulfide-bonded: cysteine 33-cysteine 84, cysteine 37-cysteine 58, cysteine 43-cysteine 64, and cysteine 47-cysteine 66.

This sequence belongs to the long (4 C-C) scorpion toxin superfamily. Sodium channel inhibitor family. Beta subfamily. As to expression, expressed by the venom gland.

The protein localises to the secreted. Beta toxins bind voltage-independently at site-4 of sodium channels (Nav) and shift the voltage of activation toward more negative potentials thereby affecting sodium channel activation and promoting spontaneous and repetitive firing. In Tityus pachyurus (Colombian scorpion), this protein is Toxin Tpa5.